The chain runs to 269 residues: Bis(5'-nucleosyl)-tetraphosphatase, symmetrical (269 aa).

This sequence belongs to the Ap4A hydrolase family.

The catalysed reaction is P(1),P(4)-bis(5'-adenosyl) tetraphosphate + H2O = 2 ADP + 2 H(+). Its function is as follows. Hydrolyzes diadenosine 5',5'''-P1,P4-tetraphosphate to yield ADP. The protein is Bis(5'-nucleosyl)-tetraphosphatase, symmetrical of Vibrio vulnificus (strain CMCP6).